A 630-amino-acid polypeptide reads, in one-letter code: DELLA protein DWARF8 (630 aa).

A disordered region spans residues 1–35 (MKREYQDAGGSGGDMGSSKDKMMAAAAGAGEQEEE). Residues 38–42 (DELLA) carry the DELLA motif motif. A disordered region spans residues 161 to 222 (PIPSPVAAPS…AAPPATQASA (62 aa)). Low complexity-rich tracts occupy residues 165-176 (PVAAPSADPSTD) and 191-222 (TSSS…QASA). The GRAS domain occupies 234-623 (VDTQEAGIRL…RPLIATSAWR (390 aa)). The tract at residues 241–297 (IRLVHALLACAEAVQQENFSAAEALVKQIPMLASSQGGAMRKVAAYFGEALARRVYR) is leucine repeat I (LRI). Positions 248 to 252 (LACAE) match the LxCxE motif motif. Residues 316–381 (HAHFYESCPY…GGPPSFRLTG (66 aa)) form a VHIID region. The short motif at 347–351 (VHVVD) is the VHIID element. A leucine repeat II (LRII) region spans residues 395–427 (QVGWKLAQFAHTIRVDFQYRGLVAATLADLEPF). The tract at residues 443–544 (IAVNSVFELH…EVYLGRQICN (102 aa)) is PFYRE. The short motif at 451–455 (LHRLL) is the LXXLL motif element. The segment at 547–623 (ACEGAERTER…RPLIATSAWR (77 aa)) is SAW.

The protein belongs to the GRAS family. DELLA subfamily. In terms of processing, phosphorylated. Post-translationally, ubiquitinated. Upon GA application it is ubiquitinated, leading to its subsequent degradation.

Its subcellular location is the nucleus. In terms of biological role, probable transcriptional regulator that acts as a repressor of the gibberellin (GA) signaling pathway. Probably acts by participating in large multiprotein complexes that repress transcription of GA-inducible genes. Upon GA application, it is degraded by the proteasome, allowing the GA signaling pathway. This Zea mays (Maize) protein is DELLA protein DWARF8 (D8).